A 495-amino-acid chain; its full sequence is Probable endopolygalacturonase D (495 aa).

A signal peptide spans Met1 to Gly16. Cysteines 154 and 169 form a disulfide. 3 PbH1 repeats span residues Met261–Asn283, Thr284–Gln322, and Ser323–Ser344. Asn295 carries an N-linked (GlcNAc...) asparagine glycan. Residue Asp337 is the Proton donor of the active site. A disulfide bond links Cys339 and Cys355. His359 is an active-site residue. Asn371 carries an N-linked (GlcNAc...) asparagine glycan. PbH1 repeat units follow at residues Val374–Ser395 and Val403–Gln425. N-linked (GlcNAc...) asparagine glycosylation is found at Asn410 and Asn444. Disulfide bonds link Cys464/Cys469 and Cys487/Cys494. The PbH1 6 repeat unit spans residues Cys469 to Ser492.

The protein belongs to the glycosyl hydrolase 28 family.

It localises to the secreted. The catalysed reaction is (1,4-alpha-D-galacturonosyl)n+m + H2O = (1,4-alpha-D-galacturonosyl)n + (1,4-alpha-D-galacturonosyl)m.. Involved in maceration and soft-rotting of plant tissue. Hydrolyzes the 1,4-alpha glycosidic bonds of de-esterified pectate in the smooth region of the plant cell wall. The polypeptide is Probable endopolygalacturonase D (pgaD) (Aspergillus niger (strain ATCC MYA-4892 / CBS 513.88 / FGSC A1513)).